Here is a 95-residue protein sequence, read N- to C-terminus: Probable FAD-linked sulfhydryl oxidase OPG072 (95 aa).

Over 1-8 the chain is Intravirion; sequence MNPKHWGR. Residues 1-95 form the ERV/ALR sulfhydryl oxidase domain; sequence MNPKHWGRAV…AIDVTKVNPL (95 aa). Residues 9–25 form a helical membrane-spanning segment; sequence AVWTIIFIVLSQAGLDG. The Virion surface portion of the chain corresponds to 26 to 95; it reads NIEACKRKLY…AIDVTKVNPL (70 aa). Cysteine 43 and cysteine 46 are joined by a disulfide.

Belongs to the orthopoxvirus OPG072 family. Interacts with OPG128/A2.5; this interaction involves formation of a transient disulfide-bonded intermediate, allowing disulfide bond transfer. FAD is required as a cofactor.

It localises to the virion membrane. It is found in the host cytoplasm. The enzyme catalyses 2 R'C(R)SH + O2 = R'C(R)S-S(R)CR' + H2O2. Functionally, FAD-dependent sulfhydryl oxidase that catalyzes disulfide bond formation. The complete pathway for formation of disulfide bonds in intracellular virion membrane proteins sequentially involves thiol-disulfide transfer between OPG072/E10, OPG128/A2.5 and OPG088/G4. In Bos taurus (Bovine), this protein is Probable FAD-linked sulfhydryl oxidase OPG072 (OPG072).